The primary structure comprises 212 residues: Fe/S biogenesis protein NfuA (212 aa).

[4Fe-4S] cluster-binding residues include Cys-169 and Cys-172.

Belongs to the NfuA family. As to quaternary structure, homodimer. The cofactor is [4Fe-4S] cluster.

In terms of biological role, involved in iron-sulfur cluster biogenesis. Binds a 4Fe-4S cluster, can transfer this cluster to apoproteins, and thereby intervenes in the maturation of Fe/S proteins. Could also act as a scaffold/chaperone for damaged Fe/S proteins. This chain is Fe/S biogenesis protein NfuA, found in Acinetobacter baylyi (strain ATCC 33305 / BD413 / ADP1).